Reading from the N-terminus, the 144-residue chain is Large ribosomal subunit protein uL15 (144 aa).

Positions 1–53 (MRLNTLSPAEGAKHAPKRLGRGIGSGLGKTGGRGHKGQNSRSGGGVRRGFEGG) are disordered. Over residues 21–31 (RGIGSGLGKTG) the composition is skewed to gly residues.

Belongs to the universal ribosomal protein uL15 family. In terms of assembly, part of the 50S ribosomal subunit.

In terms of biological role, binds to the 23S rRNA. This is Large ribosomal subunit protein uL15 from Pectobacterium atrosepticum (strain SCRI 1043 / ATCC BAA-672) (Erwinia carotovora subsp. atroseptica).